Reading from the N-terminus, the 229-residue chain is Protein-L-isoaspartate O-methyltransferase (229 aa).

Residue Ser-65 is part of the active site.

It belongs to the methyltransferase superfamily. L-isoaspartyl/D-aspartyl protein methyltransferase family.

The protein resides in the cytoplasm. The enzyme catalyses [protein]-L-isoaspartate + S-adenosyl-L-methionine = [protein]-L-isoaspartate alpha-methyl ester + S-adenosyl-L-homocysteine. In terms of biological role, catalyzes the methyl esterification of L-isoaspartyl residues in peptides and proteins that result from spontaneous decomposition of normal L-aspartyl and L-asparaginyl residues. It plays a role in the repair and/or degradation of damaged proteins. The protein is Protein-L-isoaspartate O-methyltransferase of Chlorobium phaeovibrioides (strain DSM 265 / 1930) (Prosthecochloris vibrioformis (strain DSM 265)).